An 877-amino-acid chain; its full sequence is DNA polymerase I (877 aa).

The region spanning 177-270 (TPAQFIDLKA…LEDLVYSGPD (94 aa)) is the 5'-3' exonuclease domain. One can recognise a 3'-5' exonuclease domain in the interval 302-465 (DFTIVDQISQ…TEPILLEKLS (164 aa)).

It belongs to the DNA polymerase type-A family. Single-chain monomer with multiple functions.

It catalyses the reaction DNA(n) + a 2'-deoxyribonucleoside 5'-triphosphate = DNA(n+1) + diphosphate. Functionally, in addition to polymerase activity, this DNA polymerase exhibits 3'-5' and 5'-3' exonuclease activity. This Streptococcus pneumoniae (strain ATCC BAA-255 / R6) protein is DNA polymerase I (polA).